A 932-amino-acid polypeptide reads, in one-letter code: Adhesion G protein-coupled receptor E2 (932 aa).

Residues methionine 1–threonine 15 form the signal peptide. Residues histidine 16–serine 652 lie on the Extracellular side of the membrane. EGF-like domains lie at glycine 32 to glutamine 69 and aspartate 81 to glycine 119. Intrachain disulfides connect cysteine 36/cysteine 48, cysteine 42/cysteine 57, cysteine 85/cysteine 98, cysteine 92/cysteine 107, cysteine 137/cysteine 149, cysteine 143/cysteine 158, cysteine 160/cysteine 171, cysteine 177/cysteine 189, cysteine 183/cysteine 198, cysteine 226/cysteine 239, and cysteine 233/cysteine 248. The 40-residue stretch at aspartate 133–glutamate 172 folds into the EGF-like 3; calcium-binding domain. 2 N-linked (GlcNAc...) asparagine glycosylation sites follow: asparagine 148 and asparagine 167. The EGF-like 4; calcium-binding domain occupies aspartate 173–glycine 210. Residues aspartate 222–glutamine 260 form the EGF-like 5; calcium-binding domain. Residue asparagine 229 is glycosylated (N-linked (GlcNAc...) asparagine). Residues asparagine 269, asparagine 283, asparagine 309, asparagine 333, asparagine 344, asparagine 363, asparagine 405, asparagine 417, asparagine 474, and asparagine 499 are each glycosylated (N-linked (GlcNAc...) asparagine). The region spanning aspartate 272 to glutamine 307 is the EGF-like 6; calcium-binding domain. 2 cysteine pairs are disulfide-bonded: cysteine 276-cysteine 286 and cysteine 280-cysteine 295. The EGF-like 7; calcium-binding domain occupies aspartate 319–aspartate 354. Cystine bridges form between cysteine 323/cysteine 336 and cysteine 330/cysteine 345. Residues glutamate 482–threonine 643 enclose the GAIN-B domain. The Cell attachment site motif lies at arginine 507–aspartate 509. 2 disulfides stabilise this stretch: cysteine 596-cysteine 625 and cysteine 613-cysteine 627. Residues cysteine 596–threonine 643 form a GPS region. Residues tyrosine 653 to phenylalanine 673 traverse the membrane as a helical segment. Residues arginine 674–threonine 681 lie on the Cytoplasmic side of the membrane. The helical transmembrane segment at tyrosine 682–isoleucine 702 threads the bilayer. Residues aspartate 703 to histidine 719 are Extracellular-facing. N-linked (GlcNAc...) asparagine glycosylation is present at asparagine 707. A helical transmembrane segment spans residues tyrosine 720–valine 740. At arginine 741–methionine 756 the chain is on the cytoplasmic side. Residues leucine 757–valine 777 traverse the membrane as a helical segment. Residues histidine 778–glycine 795 are Extracellular-facing. Residues phenylalanine 796–alanine 816 form a helical membrane-spanning segment. Residues tryptophan 817–glutamine 849 lie on the Cytoplasmic side of the membrane. The chain crosses the membrane as a helical span at residues isoleucine 850–isoleucine 870. At methionine 871 to alanine 872 the chain is on the extracellular side. A helical transmembrane segment spans residues tyrosine 873–leucine 893. Residues asparagine 894–glycine 932 lie on the Cytoplasmic side of the membrane.

This sequence belongs to the G-protein coupled receptor 2 family. Adhesion G-protein coupled receptor (ADGR) subfamily.

Its subcellular location is the cell membrane. Functionally, orphan receptor involved in cell adhesion and probably in cell-cell interactions involved specifically cells of the immune system. May play a role in regulatory T-cells (Treg) development. The polypeptide is Adhesion G protein-coupled receptor E2 (Adgre1) (Rattus norvegicus (Rat)).